Reading from the N-terminus, the 201-residue chain is Glutathione peroxidase 1, mitochondrial (201 aa).

The N-terminal 27 residues, 1-27, are a transit peptide targeting the mitochondrion; it reads MLLTRKNVAVRPARAARRDVRAMSLLG. Sec-75 is a catalytic residue. Sec-75 is a non-standard amino acid (selenocysteine).

Its subcellular location is the mitochondrion. The catalysed reaction is 2 glutathione + H2O2 = glutathione disulfide + 2 H2O. In terms of biological role, may constitute a glutathione peroxidase-like protective system against oxidative stresses. Hydrogen peroxide, tert-butyl hydroperoxide and cumene, but not phosphatidylcholine hydroperoxide, can act as acceptors. This Chlamydomonas reinhardtii (Chlamydomonas smithii) protein is Glutathione peroxidase 1, mitochondrial.